We begin with the raw amino-acid sequence, 37 residues long: Bactericidin B-2 (37 aa).

Residue Gly-37 is modified to Glycine amide.

It belongs to the cecropin family.

Its subcellular location is the secreted. Its function is as follows. Cecropins have lytic and antibacterial activity against several Gram-positive and Gram-negative bacteria. This chain is Bactericidin B-2, found in Manduca sexta (Tobacco hawkmoth).